Consider the following 373-residue polypeptide: tRNA 2-selenouridine synthase (373 aa).

The Rhodanese domain maps to 12 to 136 (FINDRPMMDA…MRGFLLETTE (125 aa)). Cys95 functions as the S-selanylcysteine intermediate in the catalytic mechanism.

It belongs to the SelU family. As to quaternary structure, monomer.

It catalyses the reaction 5-methylaminomethyl-2-thiouridine(34) in tRNA + selenophosphate + (2E)-geranyl diphosphate + H2O + H(+) = 5-methylaminomethyl-2-selenouridine(34) in tRNA + (2E)-thiogeraniol + phosphate + diphosphate. The enzyme catalyses 5-methylaminomethyl-2-thiouridine(34) in tRNA + (2E)-geranyl diphosphate = 5-methylaminomethyl-S-(2E)-geranyl-thiouridine(34) in tRNA + diphosphate. It carries out the reaction 5-methylaminomethyl-S-(2E)-geranyl-thiouridine(34) in tRNA + selenophosphate + H(+) = 5-methylaminomethyl-2-(Se-phospho)selenouridine(34) in tRNA + (2E)-thiogeraniol. The catalysed reaction is 5-methylaminomethyl-2-(Se-phospho)selenouridine(34) in tRNA + H2O = 5-methylaminomethyl-2-selenouridine(34) in tRNA + phosphate. Functionally, involved in the post-transcriptional modification of the uridine at the wobble position (U34) of tRNA(Lys), tRNA(Glu) and tRNA(Gln). Catalyzes the conversion of 2-thiouridine (S2U-RNA) to 2-selenouridine (Se2U-RNA). Acts in a two-step process involving geranylation of 2-thiouridine (S2U) to S-geranyl-2-thiouridine (geS2U) and subsequent selenation of the latter derivative to 2-selenouridine (Se2U) in the tRNA chain. The protein is tRNA 2-selenouridine synthase of Ectopseudomonas mendocina (strain ymp) (Pseudomonas mendocina).